The chain runs to 374 residues: Queuine tRNA-ribosyltransferase (374 aa).

Asp-89 serves as the catalytic Proton acceptor. Substrate-binding positions include Asp-89 to Phe-93, Asp-143, Gln-187, and Gly-214. The interval Gly-245–Asp-251 is RNA binding. Asp-264 (nucleophile) is an active-site residue. Residues Thr-269–Arg-273 are RNA binding; important for wobble base 34 recognition. Cys-302, Cys-304, Cys-307, and His-333 together coordinate Zn(2+).

This sequence belongs to the queuine tRNA-ribosyltransferase family. In terms of assembly, homodimer. Within each dimer, one monomer is responsible for RNA recognition and catalysis, while the other monomer binds to the replacement base PreQ1. It depends on Zn(2+) as a cofactor.

The enzyme catalyses 7-aminomethyl-7-carbaguanine + guanosine(34) in tRNA = 7-aminomethyl-7-carbaguanosine(34) in tRNA + guanine. The protein operates within tRNA modification; tRNA-queuosine biosynthesis. Its function is as follows. Catalyzes the base-exchange of a guanine (G) residue with the queuine precursor 7-aminomethyl-7-deazaguanine (PreQ1) at position 34 (anticodon wobble position) in tRNAs with GU(N) anticodons (tRNA-Asp, -Asn, -His and -Tyr). Catalysis occurs through a double-displacement mechanism. The nucleophile active site attacks the C1' of nucleotide 34 to detach the guanine base from the RNA, forming a covalent enzyme-RNA intermediate. The proton acceptor active site deprotonates the incoming PreQ1, allowing a nucleophilic attack on the C1' of the ribose to form the product. After dissociation, two additional enzymatic reactions on the tRNA convert PreQ1 to queuine (Q), resulting in the hypermodified nucleoside queuosine (7-(((4,5-cis-dihydroxy-2-cyclopenten-1-yl)amino)methyl)-7-deazaguanosine). The chain is Queuine tRNA-ribosyltransferase from Shewanella sp. (strain MR-4).